Consider the following 679-residue polypeptide: Glycine--tRNA ligase beta subunit (679 aa).

This sequence belongs to the class-II aminoacyl-tRNA synthetase family. In terms of assembly, tetramer of two alpha and two beta subunits.

It localises to the cytoplasm. The catalysed reaction is tRNA(Gly) + glycine + ATP = glycyl-tRNA(Gly) + AMP + diphosphate. The chain is Glycine--tRNA ligase beta subunit from Streptococcus pyogenes serotype M6 (strain ATCC BAA-946 / MGAS10394).